The following is a 351-amino-acid chain: MRKIIHIDMDCFFAAVEMRDNPALRDIPIAIGGSRERRGAISTANYPARQFGVRSAMPTAMALKLCPHLTLLPGRFDAYKEASRHVRDIFSRYTSLIEPLSLDEAWLDVTDSPHCYGSATLIAREIRQTIFNELQLTASAGVAPVKFLAKIASDLNKPNGQYVITPADVPGFLKTLPLAKIPGVGKVSAAKLENMGLRTCGDIQQCDLAMLLKRFGKFGRVLWERSQGIDERDVNSERLRKSVGVERTLAEDIHEWSDCEAIIEHLYPELERRLAIVKPDLLIARQGVKLKFNDFQQTTQEHVWPQLNKEDLITTARKTWDERRGERGVRLVGLHVTLLDPQLERQLVLGL.

The region spanning 4 to 185 is the UmuC domain; the sequence is IIHIDMDCFF…LPLAKIPGVG (182 aa). The Mg(2+) site is built by Asp-8 and Asp-103. Glu-104 is a catalytic residue.

Belongs to the DNA polymerase type-Y family. In terms of assembly, monomer. The cofactor is Mg(2+).

Its subcellular location is the cytoplasm. The catalysed reaction is DNA(n) + a 2'-deoxyribonucleoside 5'-triphosphate = DNA(n+1) + diphosphate. Functionally, poorly processive, error-prone DNA polymerase involved in untargeted mutagenesis. Copies undamaged DNA at stalled replication forks, which arise in vivo from mismatched or misaligned primer ends. These misaligned primers can be extended by PolIV. Exhibits no 3'-5' exonuclease (proofreading) activity. May be involved in translesional synthesis, in conjunction with the beta clamp from PolIII. The polypeptide is DNA polymerase IV (Salmonella paratyphi A (strain ATCC 9150 / SARB42)).